The following is a 381-amino-acid chain: Queuine tRNA-ribosyltransferase (381 aa).

The active-site Proton acceptor is the D89. Residues 89-93 (DSGGF), D143, Q187, and G214 contribute to the substrate site. Residues 245–251 (GVGKPED) form an RNA binding region. The active-site Nucleophile is the D264. Positions 269–273 (TRNAR) are RNA binding; important for wobble base 34 recognition. 4 residues coordinate Zn(2+): C302, C304, C307, and H333.

It belongs to the queuine tRNA-ribosyltransferase family. In terms of assembly, homodimer. Within each dimer, one monomer is responsible for RNA recognition and catalysis, while the other monomer binds to the replacement base PreQ1. Zn(2+) serves as cofactor.

It carries out the reaction 7-aminomethyl-7-carbaguanine + guanosine(34) in tRNA = 7-aminomethyl-7-carbaguanosine(34) in tRNA + guanine. The protein operates within tRNA modification; tRNA-queuosine biosynthesis. Catalyzes the base-exchange of a guanine (G) residue with the queuine precursor 7-aminomethyl-7-deazaguanine (PreQ1) at position 34 (anticodon wobble position) in tRNAs with GU(N) anticodons (tRNA-Asp, -Asn, -His and -Tyr). Catalysis occurs through a double-displacement mechanism. The nucleophile active site attacks the C1' of nucleotide 34 to detach the guanine base from the RNA, forming a covalent enzyme-RNA intermediate. The proton acceptor active site deprotonates the incoming PreQ1, allowing a nucleophilic attack on the C1' of the ribose to form the product. After dissociation, two additional enzymatic reactions on the tRNA convert PreQ1 to queuine (Q), resulting in the hypermodified nucleoside queuosine (7-(((4,5-cis-dihydroxy-2-cyclopenten-1-yl)amino)methyl)-7-deazaguanosine). The chain is Queuine tRNA-ribosyltransferase from Pectobacterium atrosepticum (strain SCRI 1043 / ATCC BAA-672) (Erwinia carotovora subsp. atroseptica).